Here is a 512-residue protein sequence, read N- to C-terminus: MGNIFSVANFKEPTTVEDCDSTWNTDSGGEEEQQEAEEEEESEGTEQREDDNEEEVIKQEETNEGGEEETGTETLIAEVKAVIHNPEQGDSSTVEQNIKPKRSFYAARDLYKYRHQYPQNIKDLRSPNDLCNLRFYMNKIPFKPDGVNIEEILNKWKGDYEKLEHNHTYIQWLFPLREQGLNFYAKELTSYEIEEFKKTKEAVKRFIVAYKMMLDFFGIELSDKNGNVSRAPNCQERFQHLNESQHNYLRITRILKSLGELGYENFKPPLVKLFLQESIVANTIPNMKQSALEYFVYTIKDRRQRRKLLRFACYHYEPPEHFIWGPPDKQKADENKATKKTTTPSSQKKHSHVEKKSRPAKSIKAPESPAVQHDEEKGTETMQTAEIHRQATAEVISVNETEVCDDGTVTSENNSSKTGQTEACDDGTVTAEDSSSKAEETDSGNSETRSLDTEHDLKRPEADRETCCKENIVVVEYTEKESKDCLCSLSPGTSNSNVTELKVEGSETGPFT.

Disordered regions lie at residues M1 to T72, I323 to K469, and S488 to T512. Acidic residues-rich tracts occupy residues G28–E54 and T62–G71. Positions D328–A337 are enriched in basic and acidic residues. Basic residues predominate over residues Q347–K361. Polar residues predominate over residues T408–T421. The span at R449–C468 shows a compositional bias: basic and acidic residues. Residues S490–T499 are compositionally biased toward polar residues.

The protein belongs to the opioid growth factor receptor family.

The chain is Opioid growth factor receptor-like protein 1 (ogfrl1) from Xenopus tropicalis (Western clawed frog).